A 346-amino-acid polypeptide reads, in one-letter code: Flap endonuclease 1 (346 aa).

The tract at residues 1-102 (MGVTELGKLI…AEIEERRKVK (102 aa)) is N-domain. D31, D84, E156, E158, D177, D179, and D239 together coordinate Mg(2+). The I-domain stretch occupies residues 120–261 (DVAKYMKRAV…KALKLVWEFG (142 aa)).

It belongs to the XPG/RAD2 endonuclease family. FEN1 subfamily. As to quaternary structure, interacts with PCNA. PCNA stimulates the nuclease activity without altering cleavage specificity. The cofactor is Mg(2+).

Functionally, structure-specific nuclease with 5'-flap endonuclease and 5'-3' exonuclease activities involved in DNA replication and repair. During DNA replication, cleaves the 5'-overhanging flap structure that is generated by displacement synthesis when DNA polymerase encounters the 5'-end of a downstream Okazaki fragment. Binds the unpaired 3'-DNA end and kinks the DNA to facilitate 5' cleavage specificity. Cleaves one nucleotide into the double-stranded DNA from the junction in flap DNA, leaving a nick for ligation. Also involved in the base excision repair (BER) pathway. Acts as a genome stabilization factor that prevents flaps from equilibrating into structures that lead to duplications and deletions. Also possesses 5'-3' exonuclease activity on nicked or gapped double-stranded DNA. This Pyrobaculum islandicum (strain DSM 4184 / JCM 9189 / GEO3) protein is Flap endonuclease 1.